Reading from the N-terminus, the 278-residue chain is Release factor glutamine methyltransferase (278 aa).

Residues 117 to 121, Asp-140, and Asn-184 each bind S-adenosyl-L-methionine; that span reads GTGSG. 184 to 187 serves as a coordination point for substrate; the sequence is NPPY.

The protein belongs to the protein N5-glutamine methyltransferase family. PrmC subfamily.

It catalyses the reaction L-glutaminyl-[peptide chain release factor] + S-adenosyl-L-methionine = N(5)-methyl-L-glutaminyl-[peptide chain release factor] + S-adenosyl-L-homocysteine + H(+). Functionally, methylates the class 1 translation termination release factors RF1/PrfA and RF2/PrfB on the glutamine residue of the universally conserved GGQ motif. This Bacteroides thetaiotaomicron (strain ATCC 29148 / DSM 2079 / JCM 5827 / CCUG 10774 / NCTC 10582 / VPI-5482 / E50) protein is Release factor glutamine methyltransferase.